The following is a 975-amino-acid chain: Glycine dehydrogenase (decarboxylating) (975 aa).

Lys-723 is modified (N6-(pyridoxal phosphate)lysine).

The protein belongs to the GcvP family. In terms of assembly, the glycine cleavage system is composed of four proteins: P, T, L and H. Requires pyridoxal 5'-phosphate as cofactor.

It catalyses the reaction N(6)-[(R)-lipoyl]-L-lysyl-[glycine-cleavage complex H protein] + glycine + H(+) = N(6)-[(R)-S(8)-aminomethyldihydrolipoyl]-L-lysyl-[glycine-cleavage complex H protein] + CO2. Functionally, the glycine cleavage system catalyzes the degradation of glycine. The P protein binds the alpha-amino group of glycine through its pyridoxal phosphate cofactor; CO(2) is released and the remaining methylamine moiety is then transferred to the lipoamide cofactor of the H protein. The sequence is that of Glycine dehydrogenase (decarboxylating) from Burkholderia vietnamiensis (strain G4 / LMG 22486) (Burkholderia cepacia (strain R1808)).